Here is a 141-residue protein sequence, read N- to C-terminus: HTH-type transcriptional regulator MntR (141 aa).

Residues 1–63 enclose the HTH dtxR-type domain; that stretch reads MPTPSMEDYI…YEKYRGLVLT (63 aa). The Mn(2+) site is built by Asp-8, Glu-11, His-77, Glu-99, Glu-102, and His-103.

It belongs to the DtxR/MntR family. As to quaternary structure, homodimer.

It localises to the cytoplasm. With respect to regulation, DNA binding is strongly activated by Mn(2+). Central regulator of manganese homeostasis. In Geobacillus thermodenitrificans (strain NG80-2), this protein is HTH-type transcriptional regulator MntR.